The following is a 178-amino-acid chain: Ribosome maturation factor RimM (178 aa).

The region spanning 101–178 is the PRC barrel domain; sequence DGEYYWYQLQ…EMQVDWDADF (78 aa).

It belongs to the RimM family. As to quaternary structure, binds ribosomal protein uS19.

Its subcellular location is the cytoplasm. Its function is as follows. An accessory protein needed during the final step in the assembly of 30S ribosomal subunit, possibly for assembly of the head region. Essential for efficient processing of 16S rRNA. May be needed both before and after RbfA during the maturation of 16S rRNA. It has affinity for free ribosomal 30S subunits but not for 70S ribosomes. The chain is Ribosome maturation factor RimM from Stutzerimonas stutzeri (strain A1501) (Pseudomonas stutzeri).